Reading from the N-terminus, the 33-residue chain is Beta-amanitin proprotein (33 aa).

Residues Met-1–Pro-10 constitute a propeptide that is removed on maturation. Residues Ile-11–Pro-18 constitute a cross-link (cyclopeptide (Ile-Pro)). The 2'-cysteinyl-6'-hydroxytryptophan sulfoxide (Trp-Cys) cross-link spans Trp-12–Cys-16. Positions Cys-19–Ala-33 are excised as a propeptide.

The protein belongs to the MSDIN fungal toxin family. Processed by the macrocyclase-peptidase enzyme POPB to yield a toxic cyclic decapeptide. POPB first removes 10 residues from the N-terminus. Conformational trapping of the remaining peptide forces the enzyme to release this intermediate rather than proceed to macrocyclization. The enzyme rebinds the remaining peptide in a different conformation and catalyzes macrocyclization of the N-terminal 8 residues.

Its function is as follows. Toxin belonging to the bicyclic octapeptides amatoxins that acts by binding non-competitively to RNA polymerase II and greatly slowing the elongation of transcripts from target promoters. This Amanita fuligineoides protein is Beta-amanitin proprotein.